Consider the following 475-residue polypeptide: Flavin-dependent monooxygenase (475 aa).

Belongs to the aromatic-ring hydroxylase family. FAD serves as cofactor.

It is found in the cytoplasm. The enzyme catalyses a tetracycline + NADPH + O2 + H(+) = an 11a-hydroxytetracycline + NADP(+) + H2O. It catalyses the reaction tetracycline + NADPH + O2 + H(+) = 11a-hydroxytetracycline + NADP(+) + H2O. Its activity is regulated as follows. Inhibited by anhydrotetracycline. In terms of biological role, an FAD-requiring monooxygenase active on some tetracycline antibiotic derivatives, which leads to their inactivation. Hydroxylates carbon 11a of tetracycline and some analogs. Confers resistance to tetracycline and doxycycline via an oxidoreductase activity; probably monooxygenates the antibiotics. Does not act on tigecycline. The protein is Flavin-dependent monooxygenase of Mycobacteroides abscessus (strain ATCC 19977 / DSM 44196 / CCUG 20993 / CIP 104536 / JCM 13569 / NCTC 13031 / TMC 1543 / L948) (Mycobacterium abscessus).